Here is a 65-residue protein sequence, read N- to C-terminus: Large ribosomal subunit protein bL33m (65 aa).

Residues 1-8 constitute a mitochondrion transit peptide; sequence MFLSAVFF.

Belongs to the bacterial ribosomal protein bL33 family. In terms of assembly, component of the mitochondrial large ribosomal subunit (mt-LSU). Mature mammalian 55S mitochondrial ribosomes consist of a small (28S) and a large (39S) subunit. The 28S small subunit contains a 12S ribosomal RNA (12S mt-rRNA) and 30 different proteins. The 39S large subunit contains a 16S rRNA (16S mt-rRNA), a copy of mitochondrial valine transfer RNA (mt-tRNA(Val)), which plays an integral structural role, and 52 different proteins.

It localises to the mitochondrion. This chain is Large ribosomal subunit protein bL33m (MRPL33), found in Homo sapiens (Human).